A 214-amino-acid polypeptide reads, in one-letter code: Transmembrane emp24 domain-containing protein p24delta9 (214 aa).

Residues 1 to 24 (MFLRSLNLCTILLFLAISSQVSQS) form the signal peptide. Residues 25 to 181 (LHFELQSGRT…QNLNRATNSK (157 aa)) are Lumenal-facing. Residues 34-149 (TKCISEDIKS…VEVMEFDVKR (116 aa)) enclose the GOLD domain. The stretch at 164–177 (LREREEEMQNLNRA) forms a coiled coil. Omega-N-methylated arginine is present on arginine 167. A helical transmembrane segment spans residues 182 to 202 (MAWLSFLSLFVCLGVAGMQFV). Residues 203–214 (HLKTFFEKKKVI) are Cytoplasmic-facing. The short motif at 207 to 208 (FF) is the COPII vesicle coat-binding element. The COPI vesicle coat-binding signature appears at 207 to 214 (FFEKKKVI).

The protein belongs to the EMP24/GP25L family. As to quaternary structure, probably oligomerizes with other members of the EMP24/GP25L family. Associates with the COPI vesicle coat (coatomer). Associates with the COPII vesicle coat (coatomer).

Its subcellular location is the endoplasmic reticulum membrane. It localises to the golgi apparatus. The protein resides in the cis-Golgi network membrane. The protein localises to the golgi stack membrane. In terms of biological role, involved in vesicular protein trafficking. Mainly functions in the early secretory pathway. Thought to act as cargo receptor at the lumenal side for incorporation of secretory cargo molecules into transport vesicles and to be involved in vesicle coat formation at the cytoplasmic side. The protein is Transmembrane emp24 domain-containing protein p24delta9 of Arabidopsis thaliana (Mouse-ear cress).